The following is a 334-amino-acid chain: Large ribosomal subunit protein uL3 (334 aa).

The segment covering 1–10 has biased composition (basic residues); sequence MGMKKSRPRR. Positions 1 to 20 are disordered; the sequence is MGMKKSRPRRGSLAFSPRKR.

Belongs to the universal ribosomal protein uL3 family. In terms of assembly, part of the 50S ribosomal subunit. Forms a cluster with proteins L14 and L24e.

Its function is as follows. One of the primary rRNA binding proteins, it binds directly near the 3'-end of the 23S rRNA, where it nucleates assembly of the 50S subunit. The polypeptide is Large ribosomal subunit protein uL3 (Methanococcus maripaludis (strain C6 / ATCC BAA-1332)).